Reading from the N-terminus, the 366-residue chain is Galactoside alpha-(1,2)-fucosyltransferase 1 (366 aa).

The Cytoplasmic segment spans residues 1–8; it reads MWPLSHRH. The helical; Signal-anchor for type II membrane protein transmembrane segment at 9-25 threads the bilayer; sequence LCLAFLLVCVLSAISFF. At 26-366 the chain is on the lumenal side; the sequence is LHVHQDSFRH…LSPLWTLAEP (341 aa). Residues Asn-66, Asn-302, and Asn-328 are each glycosylated (N-linked (GlcNAc...) asparagine).

It belongs to the glycosyltransferase 11 family.

The protein resides in the golgi apparatus. It is found in the golgi stack membrane. It catalyses the reaction a beta-D-galactosyl-(1-&gt;4)-N-acetyl-beta-D-glucosaminyl derivative + GDP-beta-L-fucose = an alpha-L-Fuc-(1-&gt;2)-beta-D-Gal-(1-&gt;4)-beta-D-GlcNAc derivative + GDP + H(+). The catalysed reaction is a ganglioside GA1 + GDP-beta-L-fucose = a ganglioside Fuc-GA1 + GDP + H(+). It carries out the reaction a beta-D-Gal-(1-&gt;3)-beta-D-GlcNAc-(1-&gt;3)-beta-D-Gal-(1-&gt;4)-beta-D-Glc-(1&lt;-&gt;1')-Cer(d18:1(4E)) + GDP-beta-L-fucose = alpha-L-fucosyl-(1-&gt;2)- beta-D-galactosyl-(1-&gt;3)-N-acetyl-beta-D-glucosaminyl-(1-&gt;3)-beta-D-galactosyl-(1-&gt;4)-beta-D-glucosyl-(1&lt;-&gt;1')-N-acylsphing-4-enine + GDP + H(+). The enzyme catalyses a neolactoside nLc4Cer(d18:1(4E)) + GDP-beta-L-fucose = a neolactoside IV(2)-alpha-Fuc-nLc4Cer(d18:1(4E)) + GDP + H(+). It catalyses the reaction a ganglioside GM1 + GDP-beta-L-fucose = a ganglioside Fuc-GM1 + GDP + H(+). The catalysed reaction is beta-D-galactosyl-(1-&gt;3)-N-acetyl-D-galactosamine + GDP-beta-L-fucose = alpha-L-fucosyl-(1-&gt;2)-beta-D-galactosyl-(1-&gt;3)-N-acetyl-D-galactosamine + GDP + H(+). The protein operates within protein modification; protein glycosylation. Functionally, catalyzes the transfer of L-fucose, from a guanosine diphosphate-beta-L-fucose, to the terminal galactose residue of glycoconjugates through an alpha(1,2) linkage leading to H antigen synthesis that is an intermediate substrate in the synthesis of ABO blood group antigens. H antigen is essential for maturation of the glomerular layer of the main olfactory bulb, in cell migration and early cell-cell contacts during tumor associated angiogenesis. Preferentially fucosylates soluble lactose and to a lesser extent fucosylates glycolipids gangliosides GA1 and GM1a. The sequence is that of Galactoside alpha-(1,2)-fucosyltransferase 1 from Alouatta caraya (Black howler monkey).